Consider the following 277-residue polypeptide: Tumor necrosis factor-inducible gene 6 protein (277 aa).

Residues 1–17 (MIILIYLFLLLWEDTQG) form the signal peptide. Positions 36–129 (GVYHREARSG…SERWDAYCYN (94 aa)) constitute a Link domain. Disulfide bonds link C58–C127, C82–C103, and C135–C161. An N-linked (GlcNAc...) asparagine glycan is attached at N118. Residues 135–247 (CGGVFTDPKQ…GGFQIKYVAM (113 aa)) enclose the CUB domain. Residues E183, D191, D232, S234, and V235 each contribute to the Ca(2+) site. Residues C188 and C210 are joined by a disulfide bond. N-linked (GlcNAc...) asparagine glycosylation occurs at N258.

As to quaternary structure, interacts (via Link domain) with inter-alpha-inhibitor (I-alpha-I) component bikunin. Interacts with ITIH2/HC2; this interaction is required for transesterification of the HC to hyaluronan. Interacts (via Link and CUB domains) with ITIH1. Chondroitin sulfate may be required for the stability of the complex. Interacts (via Link domain) with various C-X-C and C-C chemokines including PF4, CXCL8, CXCL11, CXCL12, CCL2, CCL7, CCL19, CCL21, and CCL27; this interaction interferes with chemokine binding to glycosaminoglycans. Interacts (primarily via Link domain) with BMP2; this interaction is inhibited by hyaluronan. Interacts (via both Link and CUB domains) with TNFSF11. Interacts (via CUB domain) with FN1 (via type III repeats 9-14); this interaction enhances fibronectin fibril assembly. TNFAIP6 may act as a bridging molecule between FN1 and THBS1. Post-translationally, N-glycosylated. As to expression, expressed in airway epithelium and submucosal gland (at protein level). Colocalizes with bikunin at the ciliary border. Present in bronchoalveolar lavage fluid (at protein level). Expressed in mesenchymal stem cells. Found in the synovial fluid of patients with rheumatoid arthritis.

The protein resides in the secreted. In terms of biological role, major regulator of extracellular matrix organization during tissue remodeling. Catalyzes the transfer of a heavy chain (HC) from inter-alpha-inhibitor (I-alpha-I) complex to hyaluronan. Cleaves the ester bond between the C-terminus of the HC and GalNAc residue of the chondroitin sulfate chain in I-alpha-I complex followed by transesterification of the HC to hyaluronan. In the process, potentiates the antiprotease function of I-alpha-I complex through release of free bikunin. Acts as a catalyst in the formation of hyaluronan-HC oligomers and hyaluronan-rich matrix surrounding the cumulus cell-oocyte complex, a necessary step for oocyte fertilization. Assembles hyaluronan in pericellular matrices that serve as platforms for receptor clustering and signaling. Enables binding of hyaluronan deposited on the surface of macrophages to LYVE1 on lymphatic endothelium and facilitates macrophage extravasation. Alters hyaluronan binding to functionally latent CD44 on vascular endothelium, switching CD44 into an active state that supports leukocyte rolling. Modulates the interaction of chemokines with extracellular matrix components and proteoglycans on endothelial cell surface, likely preventing chemokine gradient formation. In a negative feedback mechanism, may limit excessive neutrophil recruitment at inflammatory sites by antagonizing the association of CXCL8 with glycosaminoglycans on vascular endothelium. Has a role in osteogenesis and bone remodeling. Inhibits BMP2-dependent differentiation of mesenchymal stem cell to osteoblasts. Protects against bone erosion during inflammation by inhibiting TNFSF11/RANKL-dependent osteoclast activation. The sequence is that of Tumor necrosis factor-inducible gene 6 protein (TNFAIP6) from Homo sapiens (Human).